The chain runs to 316 residues: MDILLANPRGFCAGVNRAIQIVDRALELFGAPIYVRHEVVHNRHVVEDLRARGAIFVEELDEVPDAATVIFSAHGVPIAVREHAAARGLSVFDATCPLVTKVHMEVKKYSRDGMEMVLIGHAGHPEVEGTMGQVEEGMMYLVSNVSDVATLAPRNPDKLAYITQTTLSMDDTAEVIVALRSRFPLIEGPKKDDICYATQNRQDAVKSLAPDVDILLVVGAPNSSNSSRLAELGTRLGTQTHLIEDAQQLRREWFEGVGKIGISAGASAPESLVQEIMDTLRGWGARVPQEMPGVEEKVTFSLPLALIQAQTRREGA.

Cysteine 12 lines the [4Fe-4S] cluster pocket. Histidine 41 and histidine 74 together coordinate (2E)-4-hydroxy-3-methylbut-2-enyl diphosphate. Positions 41 and 74 each coordinate dimethylallyl diphosphate. The isopentenyl diphosphate site is built by histidine 41 and histidine 74. Cysteine 96 contacts [4Fe-4S] cluster. Residue histidine 124 coordinates (2E)-4-hydroxy-3-methylbut-2-enyl diphosphate. Dimethylallyl diphosphate is bound at residue histidine 124. Histidine 124 serves as a coordination point for isopentenyl diphosphate. Residue glutamate 126 is the Proton donor of the active site. Residue threonine 165 coordinates (2E)-4-hydroxy-3-methylbut-2-enyl diphosphate. Cysteine 195 contacts [4Fe-4S] cluster. 4 residues coordinate (2E)-4-hydroxy-3-methylbut-2-enyl diphosphate: serine 223, serine 224, asparagine 225, and serine 267. 4 residues coordinate dimethylallyl diphosphate: serine 223, serine 224, asparagine 225, and serine 267. Serine 223, serine 224, asparagine 225, and serine 267 together coordinate isopentenyl diphosphate.

Belongs to the IspH family. Requires [4Fe-4S] cluster as cofactor.

The catalysed reaction is isopentenyl diphosphate + 2 oxidized [2Fe-2S]-[ferredoxin] + H2O = (2E)-4-hydroxy-3-methylbut-2-enyl diphosphate + 2 reduced [2Fe-2S]-[ferredoxin] + 2 H(+). It catalyses the reaction dimethylallyl diphosphate + 2 oxidized [2Fe-2S]-[ferredoxin] + H2O = (2E)-4-hydroxy-3-methylbut-2-enyl diphosphate + 2 reduced [2Fe-2S]-[ferredoxin] + 2 H(+). It functions in the pathway isoprenoid biosynthesis; dimethylallyl diphosphate biosynthesis; dimethylallyl diphosphate from (2E)-4-hydroxy-3-methylbutenyl diphosphate: step 1/1. Its pathway is isoprenoid biosynthesis; isopentenyl diphosphate biosynthesis via DXP pathway; isopentenyl diphosphate from 1-deoxy-D-xylulose 5-phosphate: step 6/6. In terms of biological role, catalyzes the conversion of 1-hydroxy-2-methyl-2-(E)-butenyl 4-diphosphate (HMBPP) into a mixture of isopentenyl diphosphate (IPP) and dimethylallyl diphosphate (DMAPP). Acts in the terminal step of the DOXP/MEP pathway for isoprenoid precursor biosynthesis. The polypeptide is 4-hydroxy-3-methylbut-2-enyl diphosphate reductase (Acidithiobacillus ferrooxidans (strain ATCC 53993 / BNL-5-31) (Leptospirillum ferrooxidans (ATCC 53993))).